The primary structure comprises 293 residues: Acetyl-coenzyme A carboxylase carboxyl transferase subunit beta (293 aa).

The 265-residue stretch at 29–293 folds into the CoA carboxyltransferase N-terminal domain; that stretch reads LWVKCSECSQ…GVKELAEANT (265 aa). 4 residues coordinate Zn(2+): cysteine 33, cysteine 36, cysteine 52, and cysteine 55. The C4-type zinc-finger motif lies at 33–55; it reads CSECSQVAYRKDLISNFNVCSNC.

It belongs to the AccD/PCCB family. As to quaternary structure, acetyl-CoA carboxylase is a heterohexamer composed of biotin carboxyl carrier protein (AccB), biotin carboxylase (AccC) and two subunits each of ACCase subunit alpha (AccA) and ACCase subunit beta (AccD). Zn(2+) serves as cofactor.

It localises to the cytoplasm. It carries out the reaction N(6)-carboxybiotinyl-L-lysyl-[protein] + acetyl-CoA = N(6)-biotinyl-L-lysyl-[protein] + malonyl-CoA. It functions in the pathway lipid metabolism; malonyl-CoA biosynthesis; malonyl-CoA from acetyl-CoA: step 1/1. Functionally, component of the acetyl coenzyme A carboxylase (ACC) complex. Biotin carboxylase (BC) catalyzes the carboxylation of biotin on its carrier protein (BCCP) and then the CO(2) group is transferred by the transcarboxylase to acetyl-CoA to form malonyl-CoA. The chain is Acetyl-coenzyme A carboxylase carboxyl transferase subunit beta from Prochlorococcus marinus (strain MIT 9301).